We begin with the raw amino-acid sequence, 299 residues long: Acetylglutamate kinase (299 aa).

Substrate is bound by residues 72–73, R94, and N196; that span reads GG.

Belongs to the acetylglutamate kinase family. ArgB subfamily.

The protein resides in the cytoplasm. The catalysed reaction is N-acetyl-L-glutamate + ATP = N-acetyl-L-glutamyl 5-phosphate + ADP. The protein operates within amino-acid biosynthesis; L-arginine biosynthesis; N(2)-acetyl-L-ornithine from L-glutamate: step 2/4. Its function is as follows. Catalyzes the ATP-dependent phosphorylation of N-acetyl-L-glutamate. The protein is Acetylglutamate kinase of Burkholderia vietnamiensis (strain G4 / LMG 22486) (Burkholderia cepacia (strain R1808)).